The sequence spans 430 residues: Adenylosuccinate synthetase (430 aa).

GTP is bound by residues 13 to 19 (GDEGKGK) and 41 to 43 (GHT). Catalysis depends on Asp-14, which acts as the Proton acceptor. Residues Asp-14 and Gly-41 each contribute to the Mg(2+) site. Residues 14–17 (DEGK), 39–42 (NAGH), Thr-130, Arg-144, Gln-225, Thr-240, and Arg-304 contribute to the IMP site. His-42 acts as the Proton donor in catalysis. Residue 300 to 306 (ASTGRPR) participates in substrate binding. GTP-binding positions include Arg-306, 332-334 (KLD), and 414-416 (STG).

Belongs to the adenylosuccinate synthetase family. As to quaternary structure, homodimer. Requires Mg(2+) as cofactor.

The protein resides in the cytoplasm. The enzyme catalyses IMP + L-aspartate + GTP = N(6)-(1,2-dicarboxyethyl)-AMP + GDP + phosphate + 2 H(+). It functions in the pathway purine metabolism; AMP biosynthesis via de novo pathway; AMP from IMP: step 1/2. In terms of biological role, plays an important role in the de novo pathway of purine nucleotide biosynthesis. Catalyzes the first committed step in the biosynthesis of AMP from IMP. The protein is Adenylosuccinate synthetase of Xylella fastidiosa (strain M12).